A 274-amino-acid polypeptide reads, in one-letter code: NH(3)-dependent NAD(+) synthetase (274 aa).

46–53 (GISGGQDS) serves as a coordination point for ATP. A Mg(2+)-binding site is contributed by Asp-52. Position 140 (Arg-140) interacts with deamido-NAD(+). Thr-160 lines the ATP pocket. Glu-165 contacts Mg(2+). Deamido-NAD(+) is bound by residues Lys-173 and Asp-180. Residues Lys-189 and Thr-211 each contribute to the ATP site. A deamido-NAD(+)-binding site is contributed by 260 to 261 (HK).

The protein belongs to the NAD synthetase family. Homodimer.

The catalysed reaction is deamido-NAD(+) + NH4(+) + ATP = AMP + diphosphate + NAD(+) + H(+). Its pathway is cofactor biosynthesis; NAD(+) biosynthesis; NAD(+) from deamido-NAD(+) (ammonia route): step 1/1. Its function is as follows. Catalyzes the ATP-dependent amidation of deamido-NAD to form NAD. Uses ammonia as a nitrogen source. The polypeptide is NH(3)-dependent NAD(+) synthetase (Rhodococcus erythropolis (strain PR4 / NBRC 100887)).